A 263-amino-acid polypeptide reads, in one-letter code: Ribosome maturation factor RimP (263 aa).

Residues 192-263 (EREMKRDLGI…RGEIDPIEGE (72 aa)) are disordered. Basic residues predominate over residues 217 to 231 (PARRNAPKPKLKSTA). Over residues 232–257 (KAHEKKPPKNTKEHRLAAERLRRGEI) the composition is skewed to basic and acidic residues.

The protein belongs to the RimP family.

The protein localises to the cytoplasm. Functionally, required for maturation of 30S ribosomal subunits. The polypeptide is Ribosome maturation factor RimP (Nitrobacter hamburgensis (strain DSM 10229 / NCIMB 13809 / X14)).